The following is a 459-amino-acid chain: Argininosuccinate lyase (459 aa).

It belongs to the lyase 1 family. Argininosuccinate lyase subfamily.

It localises to the cytoplasm. It catalyses the reaction 2-(N(omega)-L-arginino)succinate = fumarate + L-arginine. It participates in amino-acid biosynthesis; L-arginine biosynthesis; L-arginine from L-ornithine and carbamoyl phosphate: step 3/3. The polypeptide is Argininosuccinate lyase (Staphylococcus aureus (strain MRSA252)).